Reading from the N-terminus, the 105-residue chain is Small ribosomal subunit protein uS10 (105 aa).

Belongs to the universal ribosomal protein uS10 family. In terms of assembly, part of the 30S ribosomal subunit.

Involved in the binding of tRNA to the ribosomes. The polypeptide is Small ribosomal subunit protein uS10 (Anaplasma phagocytophilum (strain HZ)).